The sequence spans 203 residues: Glycerol-3-phosphate acyltransferase (203 aa).

A run of 4 helical transmembrane segments spans residues 1–21 (MIQT…LGAI), 84–104 (WLQV…VWLG), 117–137 (IFLG…MAVI), and 157–179 (LMLL…LMVL).

It belongs to the PlsY family. Probably interacts with PlsX.

The protein resides in the cell inner membrane. The catalysed reaction is an acyl phosphate + sn-glycerol 3-phosphate = a 1-acyl-sn-glycero-3-phosphate + phosphate. Its pathway is lipid metabolism; phospholipid metabolism. In terms of biological role, catalyzes the transfer of an acyl group from acyl-phosphate (acyl-PO(4)) to glycerol-3-phosphate (G3P) to form lysophosphatidic acid (LPA). This enzyme utilizes acyl-phosphate as fatty acyl donor, but not acyl-CoA or acyl-ACP. The sequence is that of Glycerol-3-phosphate acyltransferase from Synechococcus sp. (strain CC9605).